Consider the following 257-residue polypeptide: Acetylglutamate kinase (257 aa).

Substrate contacts are provided by residues 43–44, R65, and N157; that span reads GG. Residues 180 to 185 and 208 to 210 each bind ATP; these read DISSIL and IIT.

It belongs to the acetylglutamate kinase family. ArgB subfamily. Homodimer.

It localises to the cytoplasm. It catalyses the reaction N-acetyl-L-glutamate + ATP = N-acetyl-L-glutamyl 5-phosphate + ADP. The protein operates within amino-acid biosynthesis; L-arginine biosynthesis; N(2)-acetyl-L-ornithine from L-glutamate: step 2/4. Functionally, catalyzes the ATP-dependent phosphorylation of N-acetyl-L-glutamate. This chain is Acetylglutamate kinase, found in Buchnera aphidicola subsp. Acyrthosiphon pisum (strain 5A).